A 2033-amino-acid chain; its full sequence is Envoplakin (2033 aa).

Residues 1–27 (MFKGLSKGSQGKGSPKGSPAKGSPKGS) show a composition bias toward low complexity. 2 disordered regions span residues 1–37 (MFKG…AATQ) and 65–85 (QQDR…ETGR). The tract at residues 1 to 841 (MFKGLSKGSQ…LEPTLAVSAP (841 aa)) is globular 1. The tract at residues 12 to 28 (KGSPKGSPAKGSPKGSP) is 4 X 4 AA tandem repeats of K-G-S-P. Residues 71–84 (SEQSQALQHQQETG) show a composition bias toward polar residues. A Spectrin repeat occupies 229–330 (YTHLQGCTRQ…LCICQETQLQ (102 aa)). Positions 388–401 (TERATGDLQRRSRD) are enriched in basic and acidic residues. Disordered regions lie at residues 388–418 (TERA…PLHV) and 891–916 (SEDI…ESEA). An SH3 domain is found at 413 to 470 (QQPLHVDSICDWDSGEVQLLQGERYKLVDNTDPHAWVVQGPGGETKRAPAACFCIPAP). Positions 842–1673 (KRPRVAPLQE…AKVSREELSQ (832 aa)) are central fibrous rod domain. The stretch at 845–1135 (RVAPLQESIQ…AISSVEPKVI (291 aa)) forms a coiled coil. A compositionally biased stretch (basic and acidic residues) spans 891–902 (SEDIRRTHDAKQ). One copy of the Plectin 1 repeat lies at 1185–1226 (KQRPKVQLQERVHEIFQVDPETEQEITRLKAKLQEMAGKRSG). S1575 carries the post-translational modification Phosphoserine. Low complexity predominate over residues 1614-1623 (QEESKLLSQK). A disordered region spans residues 1614-1636 (QEESKLLSQKTESERQKAAQRGQ). Positions 1674–2033 (ETQTRETNLS…ASPTVPRSLR (360 aa)) are globular 2. One copy of the Plectin 2 repeat lies at 1678 to 1713 (RETNLSTKISILEPETGKDMSPYEAYKRGIIDRGQY). Phosphoserine is present on S1799. 5 Plectin repeats span residues 1818 to 1855 (LGLG…PITG), 1856 to 1893 (QKLL…NTST), 1894 to 1931 (QRLL…RESV), 1932 to 1969 (LPHL…EELA), and 1970 to 2007 (QLLQ…PLSG). S2025 bears the Phosphoserine mark.

This sequence belongs to the plakin or cytolinker family. In terms of assembly, may form a homodimer or a heterodimer with PPL. Exclusively expressed in stratified squamous epithelia.

Its subcellular location is the cell junction. It is found in the desmosome. The protein localises to the cornified envelope. It localises to the cytoplasm. The protein resides in the cytoskeleton. In terms of biological role, component of the cornified envelope of keratinocytes. May link the cornified envelope to desmosomes and intermediate filaments. This Homo sapiens (Human) protein is Envoplakin (EVPL).